Consider the following 382-residue polypeptide: Queuine tRNA-ribosyltransferase (382 aa).

Aspartate 93 functions as the Proton acceptor in the catalytic mechanism. Substrate-binding positions include 93 to 97, aspartate 147, glutamine 191, and glycine 218; that span reads DSGGF. The RNA binding stretch occupies residues 249–255; the sequence is GVGKPED. Aspartate 268 acts as the Nucleophile in catalysis. The tract at residues 273–277 is RNA binding; important for wobble base 34 recognition; the sequence is TRNAR. Positions 306, 308, 311, and 337 each coordinate Zn(2+).

This sequence belongs to the queuine tRNA-ribosyltransferase family. As to quaternary structure, homodimer. Within each dimer, one monomer is responsible for RNA recognition and catalysis, while the other monomer binds to the replacement base PreQ1. Requires Zn(2+) as cofactor.

The catalysed reaction is 7-aminomethyl-7-carbaguanine + guanosine(34) in tRNA = 7-aminomethyl-7-carbaguanosine(34) in tRNA + guanine. Its pathway is tRNA modification; tRNA-queuosine biosynthesis. Catalyzes the base-exchange of a guanine (G) residue with the queuine precursor 7-aminomethyl-7-deazaguanine (PreQ1) at position 34 (anticodon wobble position) in tRNAs with GU(N) anticodons (tRNA-Asp, -Asn, -His and -Tyr). Catalysis occurs through a double-displacement mechanism. The nucleophile active site attacks the C1' of nucleotide 34 to detach the guanine base from the RNA, forming a covalent enzyme-RNA intermediate. The proton acceptor active site deprotonates the incoming PreQ1, allowing a nucleophilic attack on the C1' of the ribose to form the product. After dissociation, two additional enzymatic reactions on the tRNA convert PreQ1 to queuine (Q), resulting in the hypermodified nucleoside queuosine (7-(((4,5-cis-dihydroxy-2-cyclopenten-1-yl)amino)methyl)-7-deazaguanosine). This is Queuine tRNA-ribosyltransferase from Actinobacillus pleuropneumoniae serotype 3 (strain JL03).